The following is a 286-amino-acid chain: ATP synthase gamma chain (286 aa).

The protein belongs to the ATPase gamma chain family. In terms of assembly, F-type ATPases have 2 components, CF(1) - the catalytic core - and CF(0) - the membrane proton channel. CF(1) has five subunits: alpha(3), beta(3), gamma(1), delta(1), epsilon(1). CF(0) has three main subunits: a, b and c.

It is found in the cell inner membrane. In terms of biological role, produces ATP from ADP in the presence of a proton gradient across the membrane. The gamma chain is believed to be important in regulating ATPase activity and the flow of protons through the CF(0) complex. The chain is ATP synthase gamma chain from Flavobacterium psychrophilum (strain ATCC 49511 / DSM 21280 / CIP 103535 / JIP02/86).